The chain runs to 608 residues: Amino-acid acetyltransferase, mitochondrial (608 aa).

An N-acetyltransferase domain is found at 402 to 604 (LNLITEHEKG…DICTRIEPSL (203 aa)).

This sequence belongs to the acetyltransferase family.

Its subcellular location is the mitochondrion. It carries out the reaction L-glutamate + acetyl-CoA = N-acetyl-L-glutamate + CoA + H(+). The protein operates within amino-acid biosynthesis; L-arginine biosynthesis; N(2)-acetyl-L-ornithine from L-glutamate: step 1/4. Its function is as follows. N-acetylglutamate synthase involved in arginine biosynthesis. The protein is Amino-acid acetyltransferase, mitochondrial (ARG2) of Yarrowia lipolytica (strain CLIB 122 / E 150) (Yeast).